Reading from the N-terminus, the 617-residue chain is Putative metal ion transporter C17A12.14 (617 aa).

Residues 1–141 (MPSNTSRSVP…GKNTRDQPSP (141 aa)) form a disordered region. Ser105 is modified (phosphoserine). A compositionally biased stretch (basic and acidic residues) spans 117 to 136 (SHPEDIQRKEFETENGKNTR). Phosphoserine occurs at positions 152, 162, 226, and 241. Helical transmembrane passes span 560–580 (TILG…GMNV) and 590–610 (LGWF…SFIL).

It belongs to the CorA metal ion transporter (MIT) (TC 1.A.35) family. Interacts with sad1.

Its subcellular location is the membrane. The protein is Putative metal ion transporter C17A12.14 of Schizosaccharomyces pombe (strain 972 / ATCC 24843) (Fission yeast).